A 450-amino-acid polypeptide reads, in one-letter code: Chromosomal replication initiator protein DnaA (450 aa).

A domain I, interacts with DnaA modulators region spans residues 1 to 71 (MEDVWLQAQS…SVRSLTDSHF (71 aa)). A domain II region spans residues 71-113 (FQVELQVAARQQEKTAKSPRKSHTEDELGPVESEKCAPAEFST). Residues 82–103 (QEKTAKSPRKSHTEDELGPVES) form a disordered region. The domain III, AAA+ region stretch occupies residues 114–330 (NLNAKYTFDT…GMLIRLGAVA (217 aa)). ATP-binding residues include glycine 158, glycine 160, lysine 161, and threonine 162. A domain IV, binds dsDNA region spans residues 331-450 (SLTGKNITLD…IETLRKGLLN (120 aa)).

It belongs to the DnaA family. In terms of assembly, oligomerizes as a right-handed, spiral filament on DNA at oriC.

Its subcellular location is the cytoplasm. Functionally, plays an essential role in the initiation and regulation of chromosomal replication. ATP-DnaA binds to the origin of replication (oriC) to initiate formation of the DNA replication initiation complex once per cell cycle. Binds the DnaA box (a 9 base pair repeat at the origin) and separates the double-stranded (ds)DNA. Forms a right-handed helical filament on oriC DNA; dsDNA binds to the exterior of the filament while single-stranded (ss)DNA is stabiized in the filament's interior. The ATP-DnaA-oriC complex binds and stabilizes one strand of the AT-rich DNA unwinding element (DUE), permitting loading of DNA polymerase. After initiation quickly degrades to an ADP-DnaA complex that is not apt for DNA replication. Binds acidic phospholipids. This chain is Chromosomal replication initiator protein DnaA, found in Geobacter metallireducens (strain ATCC 53774 / DSM 7210 / GS-15).